Here is a 235-residue protein sequence, read N- to C-terminus: Pathogen-related protein (235 aa).

The chain is Pathogen-related protein from Hordeum vulgare (Barley).